A 256-amino-acid polypeptide reads, in one-letter code: Polycomb group RING finger protein 5 (256 aa).

The segment at 18-57 adopts an RING-type zinc-finger fold; the sequence is CYICKGYLIKPTTVTECLHTFCKTCIVQHFEDSNDCPRCG. Basic and acidic residues-rich tracts occupy residues 94 to 103 and 110 to 120; these read ESEFWKKNKP and DTSKADKPKVD. The tract at residues 94 to 133 is disordered; it reads ESEFWKKNKPQENGQDDTSKADKPKVDEEGDENEDDKDYH.

Component of a PRC1-like complex that contains PCGF5, RNF2 and UBE2D3. Interacts with RNF2; the interaction is direct. Interacts with CBX6, CBX7 and CBX8. Interacts with AUTS2; the interaction is direct. Identified in a complex that contains AUTS2, PCGF5, CSNK2B and RNF2.

It is found in the nucleus. Its subcellular location is the nucleoplasm. In terms of biological role, component of a Polycomb group (PcG) multiprotein PRC1-like complex, a complex class required to maintain the transcriptionally repressive state of many genes, including Hox genes, throughout development. PcG PRC1 complex acts via chromatin remodeling and modification of histones; it mediates monoubiquitination of histone H2A 'Lys-119', rendering chromatin heritably changed in its expressibility. Within the PRC1-like complex, regulates RNF2 ubiquitin ligase activity. Plays a redundant role with PCGF3 as part of a PRC1-like complex that mediates monoubiquitination of histone H2A 'Lys-119' on the X chromosome and is required for normal silencing of one copy of the X chromosome in XX females. The protein is Polycomb group RING finger protein 5 (PCGF5) of Homo sapiens (Human).